The primary structure comprises 970 residues: Transposase for insertion sequence element IS1071 in transposon Tn5271 (970 aa).

Belongs to the transposase 7 family.

Functionally, required for transposition of transposon Tn5271. This Comamonas testosteroni (Pseudomonas testosteroni) protein is Transposase for insertion sequence element IS1071 in transposon Tn5271.